A 278-amino-acid chain; its full sequence is Orotidine 5'-phosphate decarboxylase (278 aa).

Lys-96 functions as the Proton donor in the catalytic mechanism.

It belongs to the OMP decarboxylase family. Type 2 subfamily.

It carries out the reaction orotidine 5'-phosphate + H(+) = UMP + CO2. It functions in the pathway pyrimidine metabolism; UMP biosynthesis via de novo pathway; UMP from orotate: step 2/2. The protein is Orotidine 5'-phosphate decarboxylase of Salinispora arenicola (strain CNS-205).